The following is a 274-amino-acid chain: Acetyl-coenzyme A carboxylase carboxyl transferase subunit alpha (274 aa).

Residues 1–245 form the CoA carboxyltransferase C-terminal domain; sequence MENSQELTPW…RENLKKAIEG (245 aa).

This sequence belongs to the AccA family. As to quaternary structure, acetyl-CoA carboxylase is a heterohexamer composed of biotin carboxyl carrier protein (AccB), biotin carboxylase (AccC) and two subunits each of ACCase subunit alpha (AccA) and ACCase subunit beta (AccD).

It is found in the cytoplasm. It carries out the reaction N(6)-carboxybiotinyl-L-lysyl-[protein] + acetyl-CoA = N(6)-biotinyl-L-lysyl-[protein] + malonyl-CoA. The protein operates within lipid metabolism; malonyl-CoA biosynthesis; malonyl-CoA from acetyl-CoA: step 1/1. In terms of biological role, component of the acetyl coenzyme A carboxylase (ACC) complex. First, biotin carboxylase catalyzes the carboxylation of biotin on its carrier protein (BCCP) and then the CO(2) group is transferred by the carboxyltransferase to acetyl-CoA to form malonyl-CoA. The polypeptide is Acetyl-coenzyme A carboxylase carboxyl transferase subunit alpha (Clostridium acetobutylicum (strain ATCC 824 / DSM 792 / JCM 1419 / IAM 19013 / LMG 5710 / NBRC 13948 / NRRL B-527 / VKM B-1787 / 2291 / W)).